The sequence spans 353 residues: Tsukushi (353 aa).

Residues 1–16 (MPWPLLLLLAVSGAQT) form the signal peptide. Positions 17-58 (TRPCFPGCQCEVETFGLFDSFSLTRVDCSGLGPHIMPVPIPL) constitute an LRRNT domain. LRR repeat units lie at residues 59-80 (DTAHLDLSSNRLEMVNESVLAG), 85-106 (TLAGLDLSHNLLTSISPTAFSR), 109-130 (YLESLDLSHNGLTALPAESFTS), 132-153 (PLSDVNLSHNQLREVSVSAFTT), 159-179 (ALHVDLSHNLIHRLVPHPTRA), 185-206 (TIQSLNLAWNRLHAVPNLRDLP), 207-227 (LRYLSLDGNPLAVIGPGAFAG), 230-249 (GLTHLSLASLQRLPELAPSG), 255-276 (GLQVLDLSGNPKLNWAGAEVFS), and 280-301 (SLQELDLSGTNLVPLPEALLLH). The N-linked (GlcNAc...) asparagine glycan is linked to asparagine 74. Asparagine 137 carries an N-linked (GlcNAc...) asparagine glycan.

In terms of assembly, interacts with FZD4 (via FZ domain); competes with WNT2B for binding to FZD4, inhibiting Wnt signaling and repressing peripheral eye development. Interacts with TGFB1; the interaction contributes to regulation of the hair cycle. Interacts with netrin. Interacts with CCN2.

It localises to the secreted. Functionally, contributes to various developmental events and other processes such as wound healing and cholesterol homeostasis through its interactions with multiple signaling pathways. Wnt signaling inhibitor which competes with WNT2B for binding to Wnt receptor FZD4 and represses WNT2B-dependent development of the peripheral eye. Plays a role in regulating the hair cycle by controlling TGFB1 signaling. Required for the development of the anterior commissure in the brain by inhibiting neurite outgrowth. Essential for terminal differentiation of hippocampal neural stem cells. Plays a role in regulating bone elongation and bone mass by modulating growth plate chondrocyte function and overall body size. Required for development of the inner ear through its involvement in stereocilia formation in inner hair cells. Facilitates wound healing by inhibiting secretion of TGFB1 from macrophages which prevents myofibroblast differentiation, maintaining inflammatory cell quiescence. Plays a role in cholesterol homeostasis by reducing circulating high-density lipoprotein cholesterol, lowering cholesterol efflux capacity and decreasing cholesterol-to-bile acid conversion in the liver. In one study, shown to negatively regulate sympathetic innervation in brown fat, leading to reduced energy expenditure. In another study, shown not to affect brown fat thermogenic capacity, body weight gain or glucose homeostasis. This is Tsukushi (TSKU) from Homo sapiens (Human).